The chain runs to 499 residues: Trichoplein keratin filament-binding protein (499 aa).

Residues Ser-12–His-38 are a coiled coil. Disordered regions lie at residues Asp-46–Gln-78 and Val-169–Asn-209. Positions Ser-50–Ala-67 are enriched in polar residues. 2 stretches are compositionally biased toward basic and acidic residues: residues Gln-69 to Gln-78 and Gln-172 to Asn-209. Coiled coils occupy residues Asp-71–Lys-133, Gln-168–Glu-306, and Trp-359–Gln-484. The interaction with keratin proteins stretch occupies residues Arg-74 to Thr-499. Positions Lys-260–Gln-426 are trichohyalin/plectin homology domain.

Belongs to the TCHP family.

It localises to the cytoplasm. Its subcellular location is the cytoskeleton. The protein resides in the microtubule organizing center. The protein localises to the centrosome. May act as a 'capping' or 'branching' protein for keratin filaments in the cell periphery. May regulate K8/K18 filament and desmosome organization mainly at the apical or peripheral regions of simple epithelial cells. This Danio rerio (Zebrafish) protein is Trichoplein keratin filament-binding protein.